The sequence spans 362 residues: Peptide chain release factor 1 (362 aa).

Q235 carries the post-translational modification N5-methylglutamine.

This sequence belongs to the prokaryotic/mitochondrial release factor family. Post-translationally, methylated by PrmC. Methylation increases the termination efficiency of RF1.

The protein localises to the cytoplasm. Its function is as follows. Peptide chain release factor 1 directs the termination of translation in response to the peptide chain termination codons UAG and UAA. The chain is Peptide chain release factor 1 from Acinetobacter baumannii (strain AYE).